Reading from the N-terminus, the 107-residue chain is UPF0145 protein ESA_02470 (107 aa).

It belongs to the UPF0145 family.

This chain is UPF0145 protein ESA_02470, found in Cronobacter sakazakii (strain ATCC BAA-894) (Enterobacter sakazakii).